The sequence spans 424 residues: UPF0229 protein PFL_5654 (424 aa).

The disordered stretch occupies residues 85-108 (GEHIARPQGGGGGGGGRGKAGNSG). Gly residues predominate over residues 92 to 108 (QGGGGGGGGRGKAGNSG).

It belongs to the UPF0229 family.

The chain is UPF0229 protein PFL_5654 from Pseudomonas fluorescens (strain ATCC BAA-477 / NRRL B-23932 / Pf-5).